The sequence spans 359 residues: MEKIFQNVEIKPFLIDFSNPFIKNAAKRLFQLEEQLPLVPVNVVMDFKGINRAAVHGLSRVLQDEIPNYMLDIKPGGYKIEDSTDLFMTEQFIRNRINFIPIYAKNETLVFALRSLNNSCEVKTIYSRDLIQVAGPKLKYPIFNPTFEIGFLQPGKSLIIEDIYIKRGIGRKHAAFNLAVKTHFSHLDIEQYPTDKKEYMALSGYKQSSMTSDPRHHRLGLCFPAVPLPHINQAVRTYLKNACRVIIGRIQSIQKIYENFEEPQPELVLFSMDEEKTKAIITIKDETHTIGNLLKTYIYEMIPDISFVGYQCVPHKQEMVLTIIHKASQEDLITLLEKSIQNIIQTFQILEKNVDELIA.

It in the N-terminal section; belongs to the archaeal RpoD/eukaryotic RPB3 RNA polymerase subunit family. In the C-terminal section; belongs to the archaeal RpoL/eukaryotic RPB11/RPC19 RNA polymerase subunit family. In terms of assembly, part of the viral DNA-directed RNA polymerase that consists of 8 polII-like subunits (RPB1, RPB2, RPB3, RPB5, RPB6, RPB7, RPB9, RPB10), a capping enzyme and a termination factor.

Its subcellular location is the host cytoplasm. The protein localises to the virion. Functionally, component of the DNA-directed RNA polymerase (RNAP) that catalyzes the transcription in the cytoplasm of viral DNA into RNA using the four ribonucleoside triphosphates as substrates. The sequence is that of DNA-directed RNA polymerase RPB3-11 homolog from Ornithodoros (relapsing fever ticks).